The sequence spans 343 residues: Thiamine thiazole synthase 4, chloroplastic (343 aa).

Substrate is bound by residues A89, 109–110 (EQ), G117, and A182. C211 is subject to 2,3-didehydroalanine (Cys). Residues D213, H228, M280, and 290 to 292 (RMG) contribute to the substrate site.

Belongs to the THI4 family. In terms of assembly, homooctamer. The cofactor is Fe cation. Post-translationally, during the catalytic reaction, a sulfide is transferred from Cys-211 to a reaction intermediate, generating a dehydroalanine residue.

It localises to the plastid. It is found in the chloroplast. The enzyme catalyses [ADP-thiazole synthase]-L-cysteine + glycine + NAD(+) = [ADP-thiazole synthase]-dehydroalanine + ADP-5-ethyl-4-methylthiazole-2-carboxylate + nicotinamide + 3 H2O + 2 H(+). In terms of biological role, involved in biosynthesis of the thiamine precursor thiazole. Catalyzes the conversion of NAD and glycine to adenosine diphosphate 5-(2-hydroxyethyl)-4-methylthiazole-2-carboxylic acid (ADT), an adenylated thiazole intermediate. The reaction includes an iron-dependent sulfide transfer from a conserved cysteine residue of the protein to a thiazole intermediate. The enzyme can only undergo a single turnover, which suggests it is a suicide enzyme. May have additional roles in adaptation to various stress conditions and in DNA damage tolerance. In Physcomitrium patens (Spreading-leaved earth moss), this protein is Thiamine thiazole synthase 4, chloroplastic.